Reading from the N-terminus, the 369-residue chain is 4-hydroxy-3-methylbut-2-en-1-yl diphosphate synthase (flavodoxin) (369 aa).

Residues cysteine 270, cysteine 273, cysteine 305, and glutamate 312 each coordinate [4Fe-4S] cluster.

This sequence belongs to the IspG family. [4Fe-4S] cluster serves as cofactor.

The catalysed reaction is (2E)-4-hydroxy-3-methylbut-2-enyl diphosphate + oxidized [flavodoxin] + H2O + 2 H(+) = 2-C-methyl-D-erythritol 2,4-cyclic diphosphate + reduced [flavodoxin]. It participates in isoprenoid biosynthesis; isopentenyl diphosphate biosynthesis via DXP pathway; isopentenyl diphosphate from 1-deoxy-D-xylulose 5-phosphate: step 5/6. Converts 2C-methyl-D-erythritol 2,4-cyclodiphosphate (ME-2,4cPP) into 1-hydroxy-2-methyl-2-(E)-butenyl 4-diphosphate. This Haemophilus ducreyi (strain 35000HP / ATCC 700724) protein is 4-hydroxy-3-methylbut-2-en-1-yl diphosphate synthase (flavodoxin).